A 92-amino-acid chain; its full sequence is Large ribosomal subunit protein eL43 (92 aa).

Zn(2+) is bound by residues cysteine 39, cysteine 42, cysteine 57, and cysteine 60.

Belongs to the eukaryotic ribosomal protein eL43 family. In terms of assembly, component of the large ribosomal subunit. Mature ribosomes consist of a small (40S) and a large (60S) subunit. The 40S subunit contains 32 different proteins and 1 molecule of RNA (18S). The 60S subunit contains 45 different proteins and 3 molecules of RNA (25S, 5.8S and 5S). The cofactor is Zn(2+).

It is found in the cytoplasm. Functionally, component of the ribosome, a large ribonucleoprotein complex responsible for the synthesis of proteins in the cell. The small ribosomal subunit (SSU) binds messenger RNAs (mRNAs) and translates the encoded message by selecting cognate aminoacyl-transfer RNA (tRNA) molecules. The large subunit (LSU) contains the ribosomal catalytic site termed the peptidyl transferase center (PTC), which catalyzes the formation of peptide bonds, thereby polymerizing the amino acids delivered by tRNAs into a polypeptide chain. The nascent polypeptides leave the ribosome through a tunnel in the LSU and interact with protein factors that function in enzymatic processing, targeting, and the membrane insertion of nascent chains at the exit of the ribosomal tunnel. The polypeptide is Large ribosomal subunit protein eL43 (Candida albicans (strain SC5314 / ATCC MYA-2876) (Yeast)).